We begin with the raw amino-acid sequence, 247 residues long: Nodulation protein H (247 aa).

The hydrophobic stretch occupies residues 1-17; the sequence is MTHSTLPPQPFAILAMP.

Functionally, required for the formation of sulfated nod factor. Proposed to transfer activated sulfate (PAPS) to a N-acetylglucosamine of the nod factor. In Rhizobium meliloti (strain 1021) (Ensifer meliloti), this protein is Nodulation protein H (nodH).